Here is a 292-residue protein sequence, read N- to C-terminus: 2-(5''-triphosphoribosyl)-3'-dephosphocoenzyme-A synthase (292 aa).

This sequence belongs to the CitG/MdcB family.

It catalyses the reaction 3'-dephospho-CoA + ATP = 2'-(5''-triphospho-alpha-D-ribosyl)-3'-dephospho-CoA + adenine. In terms of biological role, catalyzes the formation of 2-(5''-triphosphoribosyl)-3'-dephosphocoenzyme-A, the precursor of the prosthetic group of the holo-acyl carrier protein (gamma chain) of citrate lyase, from ATP and dephospho-CoA. The chain is 2-(5''-triphosphoribosyl)-3'-dephosphocoenzyme-A synthase from Escherichia coli O127:H6 (strain E2348/69 / EPEC).